Consider the following 148-residue polypeptide: Macrodomain Ter protein (148 aa).

The protein belongs to the MatP family. As to quaternary structure, homodimer.

Its subcellular location is the cytoplasm. Required for spatial organization of the terminus region of the chromosome (Ter macrodomain) during the cell cycle. Prevents early segregation of duplicated Ter macrodomains during cell division. Binds specifically to matS, which is a 13 bp signature motif repeated within the Ter macrodomain. This Haemophilus influenzae (strain ATCC 51907 / DSM 11121 / KW20 / Rd) protein is Macrodomain Ter protein.